We begin with the raw amino-acid sequence, 430 residues long: uncharacterized protein (430 aa).

The protein resides in the cytoplasm. It localises to the nucleus. This is an uncharacterized protein from Schizosaccharomyces pombe (strain 972 / ATCC 24843) (Fission yeast).